A 147-amino-acid chain; its full sequence is Leghemoglobin 3 (147 aa).

The Globin domain occupies glycine 2 to glycine 147. Position 30 is a nitrated tyrosine (tyrosine 30). Heme b is bound at residue serine 45. Serine 45 carries the phosphoserine modification. An O2-binding site is contributed by histidine 61. Heme b is bound by residues lysine 64, histidine 93, and lysine 96. Residue tyrosine 135 is modified to Nitrated tyrosine.

Belongs to the plant globin family. Monomer. In terms of processing, nitrated in effective nodules and particularly in hypoxic conditions; this mechanism may play a protective role in the symbiosis by buffering toxic peroxynitrite NO(2)(-). Nitration level decrease during nodule senescence. Phosphorylation at Ser-45 disrupts the molecular environment of its porphyrin ring oxygen binding pocket, thus leading to a reduced oxygen consumption and to the delivery of oxygen O(2) to symbiosomes. Specifically and strongly expressed in root nodules and at low levels in seedlings.

The protein resides in the cytoplasm. Its subcellular location is the cytosol. It localises to the nucleus. Functionally, leghemoglobin that reversibly binds oxygen O(2) through a pentacoordinated heme iron. In root nodules, facilitates the diffusion of oxygen to the bacteroids while preventing the bacterial nitrogenase from being inactivated by buffering dioxygen, nitric oxide and carbon monoxide, and promoting the formation of reactive oxygen species (ROS, e.g. H(2)O(2)). This role is essential for symbiotic nitrogen fixation (SNF). In Lotus japonicus (Lotus corniculatus var. japonicus), this protein is Leghemoglobin 3.